The following is a 1170-amino-acid chain: Structural maintenance of chromosomes protein 2 (1170 aa).

32-39 serves as a coordination point for ATP; that stretch reads GLNGSGKS. The stretch at 172-469 forms a coiled coil; the sequence is KMFEDRREKA…DKLRARLVEY (298 aa). In terms of domain architecture, SMC hinge spans 523–641; it reads VHGVVGQLFQ…CEDPETAKKI (119 aa). Residues 678 to 1027 adopt a coiled-coil conformation; that stretch reads VDIQKYNQIQ…ISKLNEYKRE (350 aa).

It belongs to the SMC family. SMC2 subfamily. As to quaternary structure, forms a heterodimer with SMC4. Component of the condensin complex, which contains the SMC2 and SMC4 heterodimer, and three non SMC subunits that probably regulate the complex: BRN1, YCS4 and YCG1/YCS5.

The protein resides in the nucleus. The protein localises to the cytoplasm. It is found in the chromosome. Functionally, central component of the condensin complex, a complex required for conversion of interphase chromatin into mitotic-like condense chromosomes. The condensin complex probably introduces positive supercoils into relaxed DNA in the presence of type I topoisomerases and converts nicked DNA into positive knotted forms in the presence of type II topoisomerases. The polypeptide is Structural maintenance of chromosomes protein 2 (SMC2) (Saccharomyces cerevisiae (strain ATCC 204508 / S288c) (Baker's yeast)).